The following is a 125-amino-acid chain: Large ribosomal subunit protein bL20 (125 aa).

The protein belongs to the bacterial ribosomal protein bL20 family.

Functionally, binds directly to 23S ribosomal RNA and is necessary for the in vitro assembly process of the 50S ribosomal subunit. It is not involved in the protein synthesizing functions of that subunit. This Rhodospirillum rubrum (strain ATCC 11170 / ATH 1.1.1 / DSM 467 / LMG 4362 / NCIMB 8255 / S1) protein is Large ribosomal subunit protein bL20.